A 60-amino-acid polypeptide reads, in one-letter code: Mastoparan-VT1 (60 aa).

Positions 1 to 25 are cleaved as a signal peptide; the sequence is MKNTILILFTAFIALLGFFGMSAEA. The propeptide occupies 26–45; it reads LADLKADPLAGPNPDADPEA. AXPX repeat units follow at residues 31 to 34, 35 to 38, and 41 to 44; these read ADPL, AGPN, and ADPE. At Leu59 the chain carries Leucine amide.

The protein belongs to the MCD family. Mastoparan subfamily. In terms of tissue distribution, expressed by the venom gland.

The protein resides in the secreted. Functionally, antimicrobial peptide with activities against Gram-negative and Gram-positive bacteria and the fungi C.albicans and C.parapsilosis. Exhibits little hemolytic activity against washed human erythrocytes. Also acts as a mast cell degranulating peptide. Its mast cell degranulation activity may be related to the activation of G-protein coupled receptors in mast cells as well as interaction with other proteins located in cell endosomal membranes in the mast cells. Its function is as follows. Antimicrobial peptide with activities against Gram-negative and Gram-positive bacteria and the fungi C.albicans and C.parapsilosis. Exhibits little hemolytic activity against washed human erythrocytes. Also acts as a mast cell degranulating peptide. This is Mastoparan-VT1 from Vespa tropica (Greater banded hornet).